The chain runs to 532 residues: Probable galacturonosyltransferase 14 (532 aa).

At 1 to 40 (MQLHISPSMRSITISSSNEFIDLMKIKVAARHISYRTLFH) the chain is on the cytoplasmic side. Residues 41-61 (TILILAFLLPFVFILTAVVTL) traverse the membrane as a helical; Signal-anchor for type II membrane protein segment. Residues 62–532 (EGVNKCSSID…DFIKNCHILE (471 aa)) are Lumenal-facing. N-linked (GlcNAc...) asparagine glycans are attached at residues N305, N395, N444, and N519.

This sequence belongs to the glycosyltransferase 8 family. In terms of tissue distribution, expressed in roots, inflorescences, siliques, leaves and stems. Accumulates in pollen grains.

It is found in the golgi apparatus membrane. It participates in glycan metabolism; pectin biosynthesis. In terms of biological role, may be involved in pectin and/or xylans biosynthesis in cell walls. Together with GAUT13, required for pollen tube growth, possibly through the regulation of pectin biosynthesis and repartition in the pollen tube wall. This chain is Probable galacturonosyltransferase 14, found in Arabidopsis thaliana (Mouse-ear cress).